The chain runs to 202 residues: ATP synthase subunit b (202 aa).

Residues 9–29 (TTLSLCLAVCVVVIAVGTGWA) form a helical membrane-spanning segment.

This sequence belongs to the ATPase B chain family. In terms of assembly, F-type ATPases have 2 components, F(1) - the catalytic core - and F(0) - the membrane proton channel. F(1) has five subunits: alpha(3), beta(3), gamma(1), delta(1), epsilon(1). F(0) has three main subunits: a(1), b(2) and c(10-14). The alpha and beta chains form an alternating ring which encloses part of the gamma chain. F(1) is attached to F(0) by a central stalk formed by the gamma and epsilon chains, while a peripheral stalk is formed by the delta and b chains.

It localises to the cell inner membrane. Functionally, f(1)F(0) ATP synthase produces ATP from ADP in the presence of a proton or sodium gradient. F-type ATPases consist of two structural domains, F(1) containing the extramembraneous catalytic core and F(0) containing the membrane proton channel, linked together by a central stalk and a peripheral stalk. During catalysis, ATP synthesis in the catalytic domain of F(1) is coupled via a rotary mechanism of the central stalk subunits to proton translocation. Component of the F(0) channel, it forms part of the peripheral stalk, linking F(1) to F(0). The polypeptide is ATP synthase subunit b (Pelobacter propionicus (strain DSM 2379 / NBRC 103807 / OttBd1)).